Consider the following 384-residue polypeptide: Putative glutamate--cysteine ligase 2-2 (384 aa).

Belongs to the glutamate--cysteine ligase type 2 family. YbdK subfamily.

It carries out the reaction L-cysteine + L-glutamate + ATP = gamma-L-glutamyl-L-cysteine + ADP + phosphate + H(+). Functionally, ATP-dependent carboxylate-amine ligase which exhibits weak glutamate--cysteine ligase activity. This Rubrobacter xylanophilus (strain DSM 9941 / JCM 11954 / NBRC 16129 / PRD-1) protein is Putative glutamate--cysteine ligase 2-2.